Reading from the N-terminus, the 663-residue chain is Polyunsaturated fatty acid lipoxygenase ALOX15 (663 aa).

In terms of domain architecture, PLAT spans 2–115; that stretch reads GVYRIRVSTG…ILSLPEGTGC (114 aa). A Lipoxygenase domain is found at 116–663; that stretch reads TVVEDSQGLF…PSMVENSVAI (548 aa). Ser149 bears the Phosphoserine mark. Fe cation contacts are provided by His361, His366, His541, His545, and Ile663.

Belongs to the lipoxygenase family. In terms of assembly, interacts with PEBP1; in response to IL13/interleukin-13, prevents the interaction of PEBP1 with RAF1 to activate the ERK signaling cascade. Fe cation is required as a cofactor. As to expression, detected in leukocytes, lung and aorta.

Its subcellular location is the cytoplasm. The protein localises to the cytosol. It is found in the cell membrane. It localises to the lipid droplet. It catalyses the reaction (5Z,8Z,11Z,14Z)-eicosatetraenoate + O2 = (12S)-hydroperoxy-(5Z,8Z,10E,14Z)-eicosatetraenoate. The catalysed reaction is (5Z,8Z,11Z,14Z)-eicosatetraenoate + O2 = (15S)-hydroperoxy-(5Z,8Z,11Z,13E)-eicosatetraenoate. The enzyme catalyses (9Z,12Z)-octadecadienoate + O2 = (13S)-hydroperoxy-(9Z,11E)-octadecadienoate. It carries out the reaction (12S)-hydroperoxy-(5Z,8Z,10E,14Z)-eicosatetraenoate = (8S)-hydroxy-(11S,12S)-epoxy-(5Z,9E,14Z)-eicosatrienoate. It catalyses the reaction (5Z,8Z,11Z,14Z)-eicosatetraenoate + 2 O2 = (14R,15S)-dihydroperoxy-(5Z,8Z,10E,12E)-eicosatetraenoate. The catalysed reaction is (5Z,8Z,11Z,14Z)-eicosatetraenoate + 2 O2 = (8S,15S)-dihydroperoxy-(5Z,9E,11Z,13E)-eicosatetraenoate. The enzyme catalyses (14S,15R)-epoxy-(5Z,8Z,11Z)-eicosatrienoate + O2 = (8S)-hydroperoxy-(14S,15R)-epoxy-(5Z,9E,11Z)-eicosatrienoate. It carries out the reaction (14S,15R)-epoxy-(5Z,8Z,11Z)-eicosatrienoate + O2 = (12S)-hydroperoxy-(14S,15R)-epoxy-(5Z,8Z,10E)-eicosatrienoate. It catalyses the reaction (14R,15S)-epoxy-(5Z,8Z,11Z)-eicosatrienoate + O2 = (5S)-hydroperoxy-(14R,15S)-epoxy-(6E,8Z,11Z)-eicosatrienoate. The catalysed reaction is (14R,15S)-epoxy-(5Z,8Z,11Z)-eicosatrienoate + O2 = (12S)-hydroperoxy-(14R,15S)-epoxy-(5Z,8Z,10E)-eicosatrienoate. The enzyme catalyses (15R)-hydroperoxy-(5Z,8Z,11Z,13E)-eicosatetraenoate = 15-oxo-(5Z,8Z,11Z,13E)-eicosatetraenoate + H2O. It carries out the reaction (15S)-hydroperoxy-(5Z,8Z,11Z,13E)-eicosatetraenoate = (14S,15S)-epoxy-(5Z,8Z,10E,12E)-eicosatetraenoate + H2O. It catalyses the reaction (4Z,7Z,10Z,13Z,16Z)-docosapentaenoate + O2 = 14-hydroperoxy-(4Z,7Z,10Z,12E,16Z)-docosapentaenoate. The catalysed reaction is (7Z,10Z,13Z,16Z,19Z)-docosapentaenoate + O2 = 14-hydroperoxy-(7Z,10Z,12E,16Z,19Z)-docosapentaenoate. The enzyme catalyses (4Z,7Z,10Z,13Z,16Z,19Z)-docosahexaenoate + O2 = (14S)-hydroperoxy-(4Z,7Z,10Z,12E,16Z,19Z)-docosahexaenoate. It carries out the reaction (4Z,7Z,10Z,13Z,16Z,19Z)-docosahexaenoate + O2 = (17S)-hydroperoxy-(4Z,7Z,10Z,13Z,15E,19Z)-docosahexaenoate. It catalyses the reaction (7S)-hydroperoxy-(4Z,8E,10Z,13Z,16Z,19Z)-docosahexaenoate + O2 = (7S,14S)-dihydroperoxy-(4Z,8E,10Z,12E,16Z,19Z)-docosahexaenoate. The catalysed reaction is (7S)-hydroperoxy-(4Z,8E,10Z,13Z,16Z,19Z)-docosahexaenoate + O2 = (7S,17S)-dihydroperoxy-(4Z,8E,10Z,13Z,15E,19Z)-docosahexaenoate. The enzyme catalyses (4Z,7Z,10Z,13Z,16Z,19Z)-docosahexaenoate + O2 = (11S)-hydroperoxy-(4Z,7Z,9E,13Z,16Z,19Z)-docosahexaenoate. It carries out the reaction N-(5Z,8Z,11Z,14Z)-eicosatetraenoyl-taurine + O2 = N-(12S)-hydroperoxy-(5Z,8Z,10E,14Z)-eicosatetraenoyl-taurine. It catalyses the reaction N-(5Z,8Z,11Z,14Z)-eicosatetraenoyl-gamma-aminobutanoate + O2 = N-(12S)-hydroperoxy-(5Z,8Z,10E,14Z)-eicosatetraenoyl-gamma-aminobutanoate. The catalysed reaction is N-(5Z,8Z,11Z,14Z)-eicosatetraenoyl-glycine + O2 = N-(12S)-hydroperoxy-(5Z,8Z,10E,14Z)-eicosatetraenoyl-glycine. The enzyme catalyses N-(5Z,8Z,11Z,14Z)-eicosatetraenoyl-L-alanine + O2 = N-(12S)-hydroperoxy-(5Z,8Z,10E,14Z)-eicosatetraenoyl-alanine. It carries out the reaction N-(5Z,8Z,11Z,14Z)-eicosatetraenoyl-taurine + O2 = N-(15S)-hydroperoxy-(5Z,8Z,11Z,13E)-eicosatetraenoyl-taurine. It catalyses the reaction N-(5Z,8Z,11Z,14Z)-eicosatetraenoyl-gamma-aminobutanoate + O2 = N-(15S)-hydroperoxy-(5Z,8Z,11Z,13E)-eicosatetraenoyl-gamma-aminobutanoate. The catalysed reaction is N-(5Z,8Z,11Z,14Z)-eicosatetraenoyl-glycine + O2 = N-(15S)-hydroperoxy-(5Z,8Z,11Z,13E)-eicosatetraenoyl-glycine. The enzyme catalyses N-(5Z,8Z,11Z,14Z)-eicosatetraenoyl-L-alanine + O2 = N-(15S)-hydroperoxy-(5Z,8Z,11Z,13E)-eicosatetraenoyl-alanine. It participates in lipid metabolism; hydroperoxy eicosatetraenoic acid biosynthesis. Non-heme iron-containing dioxygenase that catalyzes the stereo-specific peroxidation of free and esterified polyunsaturated fatty acids generating a spectrum of bioactive lipid mediators. It inserts peroxyl groups at C12 or C15 of arachidonate ((5Z,8Z,11Z,14Z)-eicosatetraenoate) producing both 12-hydroperoxyeicosatetraenoate/12-HPETE and 15-hydroperoxyeicosatetraenoate/15-HPETE. It may then act on 12-HPETE to produce hepoxilins, which may show pro-inflammatory properties. Can also peroxidize linoleate ((9Z,12Z)-octadecadienoate) to 13-hydroperoxyoctadecadienoate. May participate in the sequential oxidations of DHA ((4Z,7Z,10Z,13Z,16Z,19Z)-docosahexaenoate) to generate specialized pro-resolving mediators (SPMs)like resolvin D5 ((7S,17S)-diHPDHA) and (7S,14S)-diHPDHA, that actively down-regulate the immune response and have anti-aggregation properties with platelets. Can convert epoxy fatty acids to hydroperoxy-epoxides derivatives followed by an intramolecular nucleophilic substitution leading to the formation of monocyclic endoperoxides. Plays an important role during the maintenance of self-tolerance by peroxidizing membrane-bound phosphatidylethanolamine which can then signal the sorting process for clearance of apoptotic cells during inflammation and prevent an autoimmune response. In addition to its role in the immune and inflammatory responses, this enzyme may play a role in epithelial wound healing in the cornea through production of lipoxin A4 (LXA(4)) and docosahexaenoic acid-derived neuroprotectin D1 (NPD1; 10R,17S-HDHA), both lipid autacoids exhibit anti-inflammatory and neuroprotective properties. Furthermore, it may regulate actin polymerization which is crucial for several biological processes such as the phagocytosis of apoptotic cells. It is also implicated in the generation of endogenous ligands for peroxisome proliferator activated receptor (PPAR-gamma), hence modulating macrophage development and function. It may also exert a negative effect on skeletal development by regulating bone mass through this pathway. As well as participates in ER stress and downstream inflammation in adipocytes, pancreatic islets, and liver. Finally, it is also involved in the cellular response to IL13/interleukin-13. This Rattus norvegicus (Rat) protein is Polyunsaturated fatty acid lipoxygenase ALOX15.